Here is a 408-residue protein sequence, read N- to C-terminus: Ribosomal RNA large subunit methyltransferase DR_0049 (408 aa).

This sequence belongs to the methyltransferase superfamily.

The catalysed reaction is cytidine(2499) in 23S rRNA + S-adenosyl-L-methionine = 5-methylcytidine(2499) in 23S rRNA + S-adenosyl-L-homocysteine + H(+). Specifically methylates the cytosine at position 2499 (m5C2499) of 23S rRNA. The polypeptide is Ribosomal RNA large subunit methyltransferase DR_0049 (Deinococcus radiodurans (strain ATCC 13939 / DSM 20539 / JCM 16871 / CCUG 27074 / LMG 4051 / NBRC 15346 / NCIMB 9279 / VKM B-1422 / R1)).